Reading from the N-terminus, the 219-residue chain is Pyridoxine/pyridoxamine 5'-phosphate oxidase (219 aa).

The disordered stretch occupies residues 1–23 (MTSSVIPPSPSAADYAAEGDRPL). FMN contacts are provided by residues 66 to 71 (RIVLLK), 81 to 82 (FT), Lys-88, and Gln-110. Lys-71 is a binding site for substrate. Substrate is bound by residues Tyr-128, Arg-132, and Ser-136. Residues 145–146 (QS) and Trp-191 contribute to the FMN site. Residue 197–199 (RMH) participates in substrate binding. Arg-201 lines the FMN pocket.

The protein belongs to the pyridoxamine 5'-phosphate oxidase family. Homodimer. The cofactor is FMN.

The catalysed reaction is pyridoxamine 5'-phosphate + O2 + H2O = pyridoxal 5'-phosphate + H2O2 + NH4(+). It catalyses the reaction pyridoxine 5'-phosphate + O2 = pyridoxal 5'-phosphate + H2O2. It functions in the pathway cofactor metabolism; pyridoxal 5'-phosphate salvage; pyridoxal 5'-phosphate from pyridoxamine 5'-phosphate: step 1/1. It participates in cofactor metabolism; pyridoxal 5'-phosphate salvage; pyridoxal 5'-phosphate from pyridoxine 5'-phosphate: step 1/1. Functionally, catalyzes the oxidation of either pyridoxine 5'-phosphate (PNP) or pyridoxamine 5'-phosphate (PMP) into pyridoxal 5'-phosphate (PLP). The sequence is that of Pyridoxine/pyridoxamine 5'-phosphate oxidase from Hyphomonas neptunium (strain ATCC 15444).